A 466-amino-acid polypeptide reads, in one-letter code: ATP synthase subunit beta (466 aa).

148–155 serves as a coordination point for ATP; it reads GGAGVGKT.

Belongs to the ATPase alpha/beta chains family. F-type ATPases have 2 components, CF(1) - the catalytic core - and CF(0) - the membrane proton channel. CF(1) has five subunits: alpha(3), beta(3), gamma(1), delta(1), epsilon(1). CF(0) has three main subunits: a(1), b(2) and c(9-12). The alpha and beta chains form an alternating ring which encloses part of the gamma chain. CF(1) is attached to CF(0) by a central stalk formed by the gamma and epsilon chains, while a peripheral stalk is formed by the delta and b chains.

Its subcellular location is the cell inner membrane. It carries out the reaction ATP + H2O + 4 H(+)(in) = ADP + phosphate + 5 H(+)(out). Produces ATP from ADP in the presence of a proton gradient across the membrane. The catalytic sites are hosted primarily by the beta subunits. The polypeptide is ATP synthase subunit beta (Xylella fastidiosa (strain M23)).